Reading from the N-terminus, the 128-residue chain is Large ribosomal subunit protein bL17 (128 aa).

The protein belongs to the bacterial ribosomal protein bL17 family. Part of the 50S ribosomal subunit. Contacts protein L32.

The protein is Large ribosomal subunit protein bL17 of Petrotoga mobilis (strain DSM 10674 / SJ95).